The following is a 367-amino-acid chain: MSDSQTLVVKLGTSVLTGGSRRLNRAHIVELVRQCAQLHAAGHRIVIVTSGAIAAGREHLGYPELPVTIASKQLLAAVGQSRLIQLWEQLFSIYGIHIGQMLLTRADMEDRERFLNARDMLRALLDNHIVPIINENDAVATVEIKVGDNDNLSALAAILAGADKLLLLTDQQGLFTADPRSNPQAELIKDVYGVDDALRSIAGDSVSGLGTGGMSTKLQAADVACRAGIDTIIASGSKPGVIGDVMEGNSVGTRFHAQASPLENRKRWIFGAPPAGEITVDEGATAAILERGSSLLPKGIKSVTGNFSRGEVIRICNQQGRDIAHGVSRYNSDALRRIAGHHSQQIDAILGYEYGPVAVHRDDMITR.

Lys10 contacts ATP. Residues Ser50, Asp137, and Asn149 each contribute to the substrate site. ATP is bound by residues 169-170 and 211-217; these read TD and TGGMSTK. The region spanning 275 to 353 is the PUA domain; it reads AGEITVDEGA…QQIDAILGYE (79 aa).

The protein belongs to the glutamate 5-kinase family.

It localises to the cytoplasm. The enzyme catalyses L-glutamate + ATP = L-glutamyl 5-phosphate + ADP. It participates in amino-acid biosynthesis; L-proline biosynthesis; L-glutamate 5-semialdehyde from L-glutamate: step 1/2. Its function is as follows. Catalyzes the transfer of a phosphate group to glutamate to form L-glutamate 5-phosphate. This chain is Glutamate 5-kinase, found in Salmonella arizonae (strain ATCC BAA-731 / CDC346-86 / RSK2980).